The following is a 440-amino-acid chain: Phenylacetate-coenzyme A ligase (440 aa).

The protein belongs to the phenylacetyl-CoA ligase family. Monomer.

It catalyses the reaction 2-phenylacetate + ATP + CoA = phenylacetyl-CoA + AMP + diphosphate. It functions in the pathway aromatic compound metabolism; phenylacetate degradation. Inhibition of activity is observed in the presence of a 1 mM of the divalent cations zinc, copper, and nickel. Its function is as follows. Catalyzes the activation of phenylacetic acid (PA) to phenylacetyl-CoA (PA-CoA). Involved in the phenylalanine metabolism. This Aromatoleum evansii (Azoarcus evansii) protein is Phenylacetate-coenzyme A ligase (paaK).